A 476-amino-acid chain; its full sequence is MSQATVEEKSKLRVIIVGGSVAGLTLAHCLAKANIDHIVLEKRAEISPQEGAFIGIWPNGARIFDQLGLYEDFESLTPPVHRMNVRFPDGFTFSSYLPRTIQERFGYPIISIDRQKVLETLYERYPHKSNVLVNKKVMNVRFSGKGVSVVTEDGSAYDGDLVVGADGIHSRIRSEMWRLADENHPGLITSQDKQAFTVEYACVFGISEQLPSLPAGEHINSYSNGLCVITFHGEKGRIFWFLLVKLPEKTTYPNTPRFSASDAASLCNKFARFRVSEDICVSDLWMHKLFASMTALEEGILERWHYDRIVLLGDSVHKMTPNIGQGANTALEDASVLASLLNNLSKLSTEDGTSAYAMTKLLNEYQSTRYERAKNTHDKSRFGARLHTRDDMIKTLIGRYVFPYAGPRVLERSVKSLATAHSVEYLPFPKRLGPAWGEYSSPNKSTLGSTPIHMLTLLLPCLFYFMYSKLNLFVSL.

FAD-binding residues include Glu-41, Gly-55, and Arg-114. Tyr-222 is a catalytic residue. Residues Asp-314 and Ala-327 each coordinate FAD. A helical transmembrane segment spans residues 447–467; sequence LGSTPIHMLTLLLPCLFYFMY.

Belongs to the paxM FAD-dependent monooxygenase family. FAD serves as cofactor.

The protein resides in the membrane. It participates in secondary metabolite biosynthesis; terpenoid biosynthesis. Functionally, FAD-dependent monooxygenase; part of the gene cluster A that mediates the biosynthesis of the fungal meroterpenoid acetoxydehydroaustin. The first step of the pathway is the synthesis of 3,5-dimethylorsellinic acid by the polyketide synthase ausA. 3,5-dimethylorsellinic acid is then prenylated by the polyprenyl transferase ausN. Further epoxidation by the FAD-dependent monooxygenase ausM and cyclization by the probable terpene cyclase ausL lead to the formation of protoaustinoid A. Protoaustinoid A is then oxidized to spiro-lactone preaustinoid A3 by the combined action of the FAD-binding monooxygenases ausB and ausC, and the dioxygenase ausE. Acid-catalyzed keto-rearrangement and ring contraction of the tetraketide portion of preaustinoid A3 by ausJ lead to the formation of preaustinoid A4. The aldo-keto reductase ausK, with the help of ausH, is involved in the next step by transforming preaustinoid A4 into isoaustinone which is in turn hydroxylated by the P450 monooxygenase ausI to form austinolide. The cytochrome P450 monooxygenase ausG then modifies austinolide to austinol. Austinol is further acetylated to austin by the O-acetyltransferase ausP, which spontaneously changes to dehydroaustin. The cytochrome P450 monooxygenase then converts dehydroaustin is into 7-dehydrodehydroaustin. The hydroxylation catalyzed by ausR permits the second O-acetyltransferase ausQ to add an additional acetyl group to the molecule, leading to the formation of acetoxydehydroaustin. Due to genetic rearrangements of the clusters and the subsequent loss of some enzymes, the end product of the Penicillium brasilianum austinoid biosynthesis clusters is acetoxydehydroaustin. The sequence is that of FAD-dependent monooxygenase ausM from Penicillium brasilianum.